The sequence spans 499 residues: Probable cytosol aminopeptidase (499 aa).

Positions 269 and 274 each coordinate Mn(2+). Lys281 is an active-site residue. Positions 292, 351, and 353 each coordinate Mn(2+). Arg355 is a catalytic residue.

Belongs to the peptidase M17 family. Mn(2+) serves as cofactor.

The protein resides in the cytoplasm. The catalysed reaction is Release of an N-terminal amino acid, Xaa-|-Yaa-, in which Xaa is preferably Leu, but may be other amino acids including Pro although not Arg or Lys, and Yaa may be Pro. Amino acid amides and methyl esters are also readily hydrolyzed, but rates on arylamides are exceedingly low.. The enzyme catalyses Release of an N-terminal amino acid, preferentially leucine, but not glutamic or aspartic acids.. In terms of biological role, presumably involved in the processing and regular turnover of intracellular proteins. Catalyzes the removal of unsubstituted N-terminal amino acids from various peptides. This chain is Probable cytosol aminopeptidase, found in Actinobacillus pleuropneumoniae serotype 5b (strain L20).